Here is a 503-residue protein sequence, read N- to C-terminus: DEAD-box ATP-dependent RNA helicase CshA (503 aa).

Residues 2 to 30 (QNFKELGISDKTVETLEAMGFKEPTPIQK) carry the Q motif motif. Residues 33 to 203 (IPYTLEGKDI…QQFMKSPQIV (171 aa)) enclose the Helicase ATP-binding domain. ATP is bound at residue 46–53 (AQTGTGKT). Residues 150 to 153 (DEAD) carry the DEAD box motif. The Helicase C-terminal domain maps to 214–375 (QIDEYYTIVK…LRPPHRKEVL (162 aa)). The interval 436–503 (EKPLARKNRQ…KGRTFADLQK (68 aa)) is disordered. Positions 466–480 (KRSKGNFNKKKGKKT) are enriched in basic residues. Basic and acidic residues predominate over residues 481–490 (DRRERQDKGR).

It belongs to the DEAD box helicase family. CshA subfamily. As to quaternary structure, oligomerizes, may be a member of the RNA degradosome.

The protein localises to the cytoplasm. The catalysed reaction is ATP + H2O = ADP + phosphate + H(+). Its function is as follows. DEAD-box RNA helicase possibly involved in RNA degradation. Unwinds dsRNA in both 5'- and 3'-directions, has RNA-dependent ATPase activity. This is DEAD-box ATP-dependent RNA helicase CshA from Staphylococcus haemolyticus (strain JCSC1435).